The primary structure comprises 65 residues: Hirudin-3A' (65 aa).

Residues 1–3 (VVY) are interaction with thrombin active site. Cystine bridges form between Cys6-Cys14, Cys16-Cys28, and Cys22-Cys39. Residues 32-65 (SDGEKNECVTGEGTPKPQSHNDGDFEEIPEEYLQ) are disordered. Thr45 carries O-linked (GalNAc...) threonine glycosylation. The interval 55 to 65 (DFEEIPEEYLQ) is interaction with fibrinogen-binding exosite of thrombin. Residues 55 to 65 (DFEEIPEEYLQ) show a composition bias toward acidic residues. Sulfotyrosine is present on Tyr63.

Belongs to the protease inhibitor I14 (hirudin) family.

It is found in the secreted. Hirudin is a potent thrombin-specific protease inhibitor. It forms a stable non-covalent complex with alpha-thrombin, thereby abolishing its ability to cleave fibrinogen. The chain is Hirudin-3A' from Hirudo medicinalis (Medicinal leech).